Reading from the N-terminus, the 116-residue chain is Aspartate 1-decarboxylase (116 aa).

Catalysis depends on S25, which acts as the Schiff-base intermediate with substrate; via pyruvic acid. S25 is subject to Pyruvic acid (Ser). T57 contributes to the substrate binding site. Catalysis depends on Y58, which acts as the Proton donor. 73–75 (GAA) is a substrate binding site.

It belongs to the PanD family. As to quaternary structure, heterooctamer of four alpha and four beta subunits. Pyruvate is required as a cofactor. Post-translationally, is synthesized initially as an inactive proenzyme, which is activated by self-cleavage at a specific serine bond to produce a beta-subunit with a hydroxyl group at its C-terminus and an alpha-subunit with a pyruvoyl group at its N-terminus.

It is found in the cytoplasm. The enzyme catalyses L-aspartate + H(+) = beta-alanine + CO2. Its pathway is cofactor biosynthesis; (R)-pantothenate biosynthesis; beta-alanine from L-aspartate: step 1/1. Functionally, catalyzes the pyruvoyl-dependent decarboxylation of aspartate to produce beta-alanine. This is Aspartate 1-decarboxylase from Syntrophus aciditrophicus (strain SB).